Reading from the N-terminus, the 97-residue chain is Putative pterin-4-alpha-carbinolamine dehydratase (97 aa).

Belongs to the pterin-4-alpha-carbinolamine dehydratase family.

The catalysed reaction is (4aS,6R)-4a-hydroxy-L-erythro-5,6,7,8-tetrahydrobiopterin = (6R)-L-erythro-6,7-dihydrobiopterin + H2O. The chain is Putative pterin-4-alpha-carbinolamine dehydratase from Ruegeria pomeroyi (strain ATCC 700808 / DSM 15171 / DSS-3) (Silicibacter pomeroyi).